The following is a 699-amino-acid chain: Elongation factor G (699 aa).

Residues 8 to 288 (EDYRNFGIMA…AVVDYLPSPL (281 aa)) form the tr-type G domain. Residues 17 to 24 (AHIDAGKT), 86 to 90 (DTPGH), and 140 to 143 (NKMD) each bind GTP.

Belongs to the TRAFAC class translation factor GTPase superfamily. Classic translation factor GTPase family. EF-G/EF-2 subfamily.

Its subcellular location is the cytoplasm. Its function is as follows. Catalyzes the GTP-dependent ribosomal translocation step during translation elongation. During this step, the ribosome changes from the pre-translocational (PRE) to the post-translocational (POST) state as the newly formed A-site-bound peptidyl-tRNA and P-site-bound deacylated tRNA move to the P and E sites, respectively. Catalyzes the coordinated movement of the two tRNA molecules, the mRNA and conformational changes in the ribosome. The polypeptide is Elongation factor G (Rhizobium etli (strain CIAT 652)).